The following is a 297-amino-acid chain: Phosphatidylserine decarboxylase proenzyme (297 aa).

Active-site charge relay system; for autoendoproteolytic cleavage activity residues include Asp-92, His-149, and Ser-254. Ser-254 acts as the Schiff-base intermediate with substrate; via pyruvic acid; for decarboxylase activity in catalysis. Ser-254 is modified (pyruvic acid (Ser); by autocatalysis).

The protein belongs to the phosphatidylserine decarboxylase family. PSD-B subfamily. Prokaryotic type I sub-subfamily. Heterodimer of a large membrane-associated beta subunit and a small pyruvoyl-containing alpha subunit. Pyruvate is required as a cofactor. Is synthesized initially as an inactive proenzyme. Formation of the active enzyme involves a self-maturation process in which the active site pyruvoyl group is generated from an internal serine residue via an autocatalytic post-translational modification. Two non-identical subunits are generated from the proenzyme in this reaction, and the pyruvate is formed at the N-terminus of the alpha chain, which is derived from the carboxyl end of the proenzyme. The autoendoproteolytic cleavage occurs by a canonical serine protease mechanism, in which the side chain hydroxyl group of the serine supplies its oxygen atom to form the C-terminus of the beta chain, while the remainder of the serine residue undergoes an oxidative deamination to produce ammonia and the pyruvoyl prosthetic group on the alpha chain. During this reaction, the Ser that is part of the protease active site of the proenzyme becomes the pyruvoyl prosthetic group, which constitutes an essential element of the active site of the mature decarboxylase.

It is found in the cell membrane. It carries out the reaction a 1,2-diacyl-sn-glycero-3-phospho-L-serine + H(+) = a 1,2-diacyl-sn-glycero-3-phosphoethanolamine + CO2. Its pathway is phospholipid metabolism; phosphatidylethanolamine biosynthesis; phosphatidylethanolamine from CDP-diacylglycerol: step 2/2. Functionally, catalyzes the formation of phosphatidylethanolamine (PtdEtn) from phosphatidylserine (PtdSer). The sequence is that of Phosphatidylserine decarboxylase proenzyme from Bordetella bronchiseptica (strain ATCC BAA-588 / NCTC 13252 / RB50) (Alcaligenes bronchisepticus).